The primary structure comprises 165 residues: Cysteine-rich hydrophobic domain-containing protein 2 (165 aa).

The stretch at 1–26 forms a coiled coil; that stretch reads MADFDEIYEEEEDEERALEEQLLKYS. A CHIC motif (Cys-rich) motif is present at residues 88-106; sequence CGCLCCCCTLGCSMWPVIC.

It belongs to the CHIC family. In terms of processing, palmitoylation in the CHIC motif is required for membrane association.

It localises to the cell membrane. The protein resides in the cytoplasmic vesicle. This is Cysteine-rich hydrophobic domain-containing protein 2 (CHIC2) from Homo sapiens (Human).